Reading from the N-terminus, the 548-residue chain is MRKQVIGINNIFHLARIRSIPVHCHCKGPLYSYPVVSKTLFHTKNVEVSKYSHVELRSLNEQIHSQLTSLTDLNKRQLLLVETLSRNNNLEKLLDYYEIDEGSVEDAIQLLQDSNVSIQEFSSMIQPVLNRTNLVGKYHMGYLSKLMQIYISLTRTHNGGSVDALNKDDMNKFIKRFIEGSQLKRAQTALQFLLDGYKERGEDLLGPYGDKQTIAHFLMLRSGALQDLWKIDVSNGNNKKQAFYKINGSHRNVKSTYNVLDSVKLFEIVRYILRYNDKDNHSQPVYFDEGILKNVILCLGYVGQTTLIEDIINKIWELDSVSVPPKYNITVTSDLLTAIVSAYSKCGKSIQPGLVIADKFFGKIPNIIVKDDFWINLQKWNIILPNKWRSTIDLSKRTWELMKSWRNSTNNGGFITANVEFLNLVYKVLSSDYIKLKDLEWIYDIFQHSLVTLYSKNSLTVDEIKLLKKFQIFTIKKMVYFGHYSKCLQFIKEWSYDAANKQQLTNLFVVLRNRYLQKRGYNQEKEMTKVQKKYDEEEQEDMLLGGLW.

The transit peptide at 1–27 (MRKQVIGINNIFHLARIRSIPVHCHCK) directs the protein to the mitochondrion.

It belongs to the AEP2 family. In terms of assembly, binds to the 5'UTR of the OLI1 mRNA.

It localises to the mitochondrion. Required for translation of the mitochondrial OLI1 transcript coding for the mitochondrial ATP synthase subunit 9. The chain is ATPase expression protein 2, mitochondrial (AEP2) from Candida glabrata (strain ATCC 2001 / BCRC 20586 / JCM 3761 / NBRC 0622 / NRRL Y-65 / CBS 138) (Yeast).